Here is a 350-residue protein sequence, read N- to C-terminus: Glycosyltransferase 8 domain-containing protein 2 (350 aa).

The Cytoplasmic portion of the chain corresponds to 1–6 (MALLRK). A helical; Signal-anchor for type II membrane protein membrane pass occupies residues 7–24 (INQVLLFLLIVTLCGILY). At 25–349 (KKVHKGTMLR…AGIFKLHHPN (325 aa)) the chain is on the lumenal side. An N-linked (GlcNAc...) asparagine glycan is attached at N234.

This sequence belongs to the glycosyltransferase 8 family.

It localises to the membrane. The chain is Glycosyltransferase 8 domain-containing protein 2 (GLT8D2) from Bos taurus (Bovine).